Here is a 403-residue protein sequence, read N- to C-terminus: Acetate kinase (403 aa).

Residue Asn-7 participates in Mg(2+) binding. ATP is bound at residue Lys-14. Arg-90 serves as a coordination point for substrate. The Proton donor/acceptor role is filled by Asp-147. Residues 207–211 (HIGNG), 283–285 (DMR), and 331–335 (GVGEN) each bind ATP. Glu-386 contacts Mg(2+).

It belongs to the acetokinase family. In terms of assembly, homodimer. It depends on Mg(2+) as a cofactor. The cofactor is Mn(2+).

Its subcellular location is the cytoplasm. The enzyme catalyses acetate + ATP = acetyl phosphate + ADP. It participates in metabolic intermediate biosynthesis; acetyl-CoA biosynthesis; acetyl-CoA from acetate: step 1/2. In terms of biological role, catalyzes the formation of acetyl phosphate from acetate and ATP. Can also catalyze the reverse reaction. Phosphorylates propionate (54%) in addition to acetate (100%). Uses GTP (100%), ITP (163%), UTP (56%), and CTP (21%) as phosphoryl donors in addition to ATP (100%). This is Acetate kinase from Thermotoga maritima (strain ATCC 43589 / DSM 3109 / JCM 10099 / NBRC 100826 / MSB8).